Here is a 404-residue protein sequence, read N- to C-terminus: Short chain dehydrogenase sirR (404 aa).

The signal sequence occupies residues 1 to 28 (MHSKPQRALVIGATGVSGWSLCLQLLQT). Positions 56 and 58 each coordinate NADP(+). 2 N-linked (GlcNAc...) asparagine glycosylation sites follow: asparagine 67 and asparagine 157. Serine 237 acts as the Proton donor in catalysis. Asparagine 274 carries N-linked (GlcNAc...) asparagine glycosylation. NADP(+) is bound at residue valine 291.

The protein belongs to the short-chain dehydrogenases/reductases (SDR) family. Highly divergent.

It functions in the pathway mycotoxin biosynthesis. Functionally, short chain dehydrogenase; part of the gene cluster that mediates the biosynthesis of sirodesmin PL, an epipolythiodioxopiperazine (ETP) characterized by a disulfide bridged cyclic dipeptide and that acts as a phytotoxin which is involved in the blackleg didease of canola. SirD catalyzes the O-prenylation of L-tyrosine (L-Tyr) in the presence of dimethylallyl diphosphate (DMAPP) to yield 4-O-dimethylallyl-L-Tyr, and therefore represents probably the first pathway-specific enzyme in the biosynthesis of sirodesmin PL. 4-O-dimethylallyl-L-Tyr, then undergoes condensation with L-Ser in a reaction catalyzed by the non-ribosomal peptide synthase sirP to form the diketopiperazine (DKP) backbone. Further bishydroxylation of the DKP performed by the cytochrome P450 monooxygenase sirC leads to the production of the intermediate phomamide. This step is essential to form the reactive thiol group required for toxicity of sirodesmin PL. The next steps of sirodesmin biosynthesis are not well understood yet, but some predictions could be made from intermediate compounds identification. Phomamide is converted into phomalizarine via oxidation, probably by sirT. Further oxidation, methylation (by sirM or sirN) and reduction steps convert phomalizarine to deacetyl sirodesmin. Finally, acetyltransferase sirH probably acetylates deacetyl sirodesmin to produce sirodesmin PL. This chain is Short chain dehydrogenase sirR, found in Leptosphaeria maculans (Blackleg fungus).